The following is a 112-amino-acid chain: ATP synthase subunit c (112 aa).

2 helical membrane-spanning segments follow: residues 36 to 56 and 81 to 101; these read FSVLAAGLGLGVAALGGAIGM and MFIALAMIEAQVIYALVIALI.

The protein belongs to the ATPase C chain family. F-type ATPases have 2 components, F(1) - the catalytic core - and F(0) - the membrane proton channel. F(1) has five subunits: alpha(3), beta(3), gamma(1), delta(1), epsilon(1). F(0) has three main subunits: a(1), b(2) and c(10-14). The alpha and beta chains form an alternating ring which encloses part of the gamma chain. F(1) is attached to F(0) by a central stalk formed by the gamma and epsilon chains, while a peripheral stalk is formed by the delta and b chains.

It localises to the cell inner membrane. Its function is as follows. F(1)F(0) ATP synthase produces ATP from ADP in the presence of a proton or sodium gradient. F-type ATPases consist of two structural domains, F(1) containing the extramembraneous catalytic core and F(0) containing the membrane proton channel, linked together by a central stalk and a peripheral stalk. During catalysis, ATP synthesis in the catalytic domain of F(1) is coupled via a rotary mechanism of the central stalk subunits to proton translocation. In terms of biological role, key component of the F(0) channel; it plays a direct role in translocation across the membrane. A homomeric c-ring of between 10-14 subunits forms the central stalk rotor element with the F(1) delta and epsilon subunits. This chain is ATP synthase subunit c, found in Campylobacter jejuni subsp. jejuni serotype O:6 (strain 81116 / NCTC 11828).